Reading from the N-terminus, the 747-residue chain is Homeobox-leucine zipper protein GLABRA 2 (747 aa).

The tract at residues 31-112 (RNASSGSTNP…KKYHRHTTDQ (82 aa)) is disordered. Residues 58–68 (EMSSENSGPTR) show a composition bias toward polar residues. Over residues 73 to 90 (EDLEGEDHDDEEEEEEDG) the composition is skewed to acidic residues. The segment covering 97 to 107 (TNKRKRKKYHR) has biased composition (basic residues). The segment at residues 101–160 (KRKKYHRHTTDQIRHMEALFKETPHPDEKQRQQLSKQLGLAPRQVKFWFQNRRTQIKAIQ) is a DNA-binding region (homeobox). Residues 155 to 223 (QIKAIQERHE…LDKLRAALGR (69 aa)) adopt a coiled-coil conformation. Residues 250–489 (FALEKSRIAE…LQLHCERLVF (240 aa)) enclose the START domain.

This sequence belongs to the HD-ZIP homeobox family. Class IV subfamily. As to quaternary structure, interacts with GIR1 and GIR2. As to expression, expressed in individual developing trichome cells of the emerging leaf primordia. Expressed in differentiating hairless cells of root epidermis.

The protein localises to the nucleus. Transcription factor involved in the determination of epidermal cell identity. Required for correct morphological development and maturation of trichomes. Regulates the frequency of trichome initiation and determines trichome spacing. Acts as a negative factor for root hair development. Required for ectopic repression of root hair development in a subset of epidermal cells. May suppress hair formation in root epidermis by promoting differentiation into hairless epidermal cells. Directly suppresses the bHLH transcription factor genes, RHD6, RSL1, RSL2, LRL1, and LRL2, which have diverse functions in root hair development. Required for normal development of seed coat mucilage. Involved in the control of seed oil accumulation. Acts as a negative regulator of anthocyanin biosynthesis. May directly repress the expression of some component genes from the MYB-bHLH-WD40 (MBW) transcriptional activator complex. The MBW complex activates the transcription of late biosynthesis genes in the flavonoid pathway, leading to the production of anthocyanins. The protein is Homeobox-leucine zipper protein GLABRA 2 of Arabidopsis thaliana (Mouse-ear cress).